A 167-amino-acid chain; its full sequence is uncharacterized protein (167 aa).

The chain crosses the membrane as a helical span at residues 5–27; that stretch reads LILLTFVSFVFSKTFYYDVYVFF.

It is found in the membrane. This is an uncharacterized protein from Aquifex aeolicus (strain VF5).